Reading from the N-terminus, the 119-residue chain is Small ribosomal subunit protein uS10 (119 aa).

This sequence belongs to the universal ribosomal protein uS10 family. As to quaternary structure, component of the 40S small ribosomal subunit.

The protein resides in the cytoplasm. Functionally, component of the small ribosomal subunit. The ribosome is a large ribonucleoprotein complex responsible for the synthesis of proteins in the cell. The protein is Small ribosomal subunit protein uS10 (rps20) of Xenopus laevis (African clawed frog).